An 83-amino-acid chain; its full sequence is MKILIFIIASFMLIGVWCKEGYPMGRDGCKIPCALNHKFCKTECQAKWKGSDGYCYSTGMSCYCTNLPENAEVWDPNNNKCVG.

The signal sequence occupies residues 1–18 (MKILIFIIASFMLIGVWC). Residues 19 to 82 (KEGYPMGRDG…VWDPNNNKCV (64 aa)) enclose the LCN-type CS-alpha/beta domain. 4 disulfides stabilise this stretch: Cys29–Cys81, Cys33–Cys55, Cys40–Cys62, and Cys44–Cys64.

Belongs to the long (4 C-C) scorpion toxin superfamily. Sodium channel inhibitor family. Beta subfamily. As to expression, expressed by the venom gland.

Its subcellular location is the secreted. In terms of biological role, beta toxins bind voltage-independently at site-4 of sodium channels (Nav) and shift the voltage of activation toward more negative potentials thereby affecting sodium channel activation and promoting spontaneous and repetitive firing. This is Putative beta-neurotoxin RjAa10f from Rhopalurus junceus (Caribbean blue scorpion).